A 251-amino-acid polypeptide reads, in one-letter code: uncharacterized protein (251 aa).

6 residues coordinate a divalent metal cation: His5, His7, Glu101, His132, His163, and Asp209.

This sequence belongs to the metallo-dependent hydrolases superfamily. TatD-type hydrolase family. The cofactor is a divalent metal cation.

This is an uncharacterized protein from Methanocaldococcus jannaschii (strain ATCC 43067 / DSM 2661 / JAL-1 / JCM 10045 / NBRC 100440) (Methanococcus jannaschii).